A 384-amino-acid polypeptide reads, in one-letter code: Probable L-aspartate decarboxylase (384 aa).

An N6-(pyridoxal phosphate)lysine modification is found at Lys233.

It belongs to the group II decarboxylase family. MfnA subfamily. The cofactor is pyridoxal 5'-phosphate.

The catalysed reaction is L-aspartate + H(+) = beta-alanine + CO2. It functions in the pathway cofactor biosynthesis; coenzyme A biosynthesis. Functionally, catalyzes the decarboxylation of L-aspartate to produce beta-alanine. The protein is Probable L-aspartate decarboxylase of Pyrococcus abyssi (strain GE5 / Orsay).